The sequence spans 461 residues: Pancreatic triacylglycerol lipase (461 aa).

Positions 1-12 are cleaved as a signal peptide; that stretch reads WTLSLLLGAVVG. 2 disulfides stabilise this stretch: Cys-16–Cys-22 and Cys-103–Cys-114. Ser-165 acts as the Nucleophile in catalysis. Residue Asp-189 is the Charge relay system of the active site. Residues Glu-200, Arg-203, Asp-205, and Asp-208 each contribute to the Ca(2+) site. Cys-250 and Cys-274 are disulfide-bonded. The Charge relay system role is filled by His-276. Disulfide bonds link Cys-298–Cys-309, Cys-312–Cys-317, and Cys-445–Cys-461. Residues 351–461 enclose the PLAT domain; the sequence is WRYRVDVTLS…EDVLLTLTAC (111 aa).

This sequence belongs to the AB hydrolase superfamily. Lipase family. Forms a 1:1 stoichiometric complex with (pro)colipase/CLPS.

The protein localises to the secreted. The enzyme catalyses a triacylglycerol + H2O = a diacylglycerol + a fatty acid + H(+). The catalysed reaction is 1,2,3-tributanoylglycerol + H2O = dibutanoylglycerol + butanoate + H(+). It carries out the reaction 1,2,3-tri-(9Z-octadecenoyl)-glycerol + H2O = di-(9Z)-octadecenoylglycerol + (9Z)-octadecenoate + H(+). It catalyses the reaction all-trans-retinyl hexadecanoate + H2O = all-trans-retinol + hexadecanoate + H(+). The enzyme catalyses 1,2-di-(9Z-octadecenoyl)-glycerol + H2O = (9Z-octadecenoyl)-glycerol + (9Z)-octadecenoate + H(+). With respect to regulation, inhibited by bile salts, is reactivated by (pro)colipase/CLPS. Functionally, plays an important role in fat metabolism. It preferentially splits the esters of long-chain fatty acids at positions 1 and 3, producing mainly 2-monoacylglycerol and free fatty acids, and shows considerably higher activity against insoluble emulsified substrates than against soluble ones. This Equus caballus (Horse) protein is Pancreatic triacylglycerol lipase (PNLIP).